The chain runs to 334 residues: WD repeat-containing protein 54 (334 aa).

3 WD repeats span residues 162–206, 208–247, and 250–289; these read GHQM…TLLT, IPGF…LHVQ, and AHAR…ESGY.

As to quaternary structure, homodimer and homotrimer; forms tight forms of dimers and trimers. Interacts with IZUMO1 and IZUMO1R/JUNO. Post-translationally, cross-linked to tightly form both dimers and trimers by TGM2. Cross-linking enhances the activation of EGF receptor-mediated signaling pathway. Cross-linking is inhibited by EGF. In terms of processing, ubiquitinated. EGF increases ubiquitination. As to expression, expressed in epithelial cells (at protein level). Isoform 3 expression is highly increased in colorectal cancer cells.

The protein localises to the vesicle. Its subcellular location is the cytoplasm. The protein resides in the cell membrane. Plays a role in the adhesion and fusion of the sperm-oocyte membrane through its interactions with IZUMO1 and IZUMO1R/JUNO. When cross-linked to form dimers and trimers, it has a regulatory effect on ERK signaling pathway activity in response to EGF stimulation. Colocalizes with the EGF receptor in WDR54-specific vesicle where it sustains the internalization and controls the degradation of the EGF receptor after EGF stimulation. In Homo sapiens (Human), this protein is WD repeat-containing protein 54.